The following is a 227-amino-acid chain: Small ribosomal subunit protein uS3 (227 aa).

Positions 39–107 constitute a KH type-2 domain; sequence VRQLLQKRLK…PVHITIEEVR (69 aa).

The protein belongs to the universal ribosomal protein uS3 family. As to quaternary structure, part of the 30S ribosomal subunit. Forms a tight complex with proteins S10 and S14.

In terms of biological role, binds the lower part of the 30S subunit head. Binds mRNA in the 70S ribosome, positioning it for translation. This is Small ribosomal subunit protein uS3 (rpsC) from Coxiella burnetii (strain RSA 493 / Nine Mile phase I).